Consider the following 566-residue polypeptide: Urease subunit alpha (566 aa).

A Urease domain is found at 128–566 (GGIDTHIHWI…LPMAQRYFLF (439 aa)). Positions 133, 135, and 216 each coordinate Ni(2+). An N6-carboxylysine modification is found at K216. Residue H218 participates in substrate binding. The Ni(2+) site is built by H245 and H271. The active-site Proton donor is H319. D359 contributes to the Ni(2+) binding site.

The protein belongs to the metallo-dependent hydrolases superfamily. Urease alpha subunit family. Heterotrimer of UreA (gamma), UreB (beta) and UreC (alpha) subunits. Three heterotrimers associate to form the active enzyme. It depends on Ni cation as a cofactor. Carboxylation allows a single lysine to coordinate two nickel ions.

Its subcellular location is the cytoplasm. The catalysed reaction is urea + 2 H2O + H(+) = hydrogencarbonate + 2 NH4(+). Its pathway is nitrogen metabolism; urea degradation; CO(2) and NH(3) from urea (urease route): step 1/1. The chain is Urease subunit alpha from Acinetobacter baylyi (strain ATCC 33305 / BD413 / ADP1).